A 314-amino-acid chain; its full sequence is Serine protease 46 (314 aa).

The region spanning 44–281 (VVNGKVVEVG…FTQWIKRQIG (238 aa)) is the Peptidase S1 domain. A disulfide bridge connects residues C69 and C85. Catalysis depends on charge relay system residues H84 and D130. Disulfide bonds link C164/C239, C197/C219, and C229/C257. The active-site Charge relay system is S233. Residues 293-313 (FLSPFILTGYILLVSLGSLWL) form a helical membrane-spanning segment.

This sequence belongs to the peptidase S1 family.

Its subcellular location is the membrane. The polypeptide is Serine protease 46 (Prss46) (Rattus norvegicus (Rat)).